Consider the following 65-residue polypeptide: Conotoxin Cal1.5 (65 aa).

The N-terminal stretch at 1–18 is a signal peptide; sequence MRCLPVFIILLLLASTAA. Residues 19 to 49 constitute a propeptide that is removed on maturation; the sequence is VDVAGSKLKRRLERKPYQGSQAYVKKTAFGL. 2 disulfide bridges follow: Cys52–Cys62 and Cys53–Cys59. The residue at position 61 (Pro61) is a 4-hydroxyproline.

The protein belongs to the conotoxin T superfamily. Expressed by the venom duct.

Its subcellular location is the secreted. Its function is as follows. Probable neurotoxin with unknown target. Possibly targets ion channels. The protein is Conotoxin Cal1.5 of Californiconus californicus (California cone).